Reading from the N-terminus, the 138-residue chain is Basic phospholipase A2 trimucrotoxin (138 aa).

A signal peptide spans 1-16; that stretch reads MRTLWIVAVLLLGVEG. Cystine bridges form between cysteine 42–cysteine 131, cysteine 44–cysteine 60, cysteine 59–cysteine 111, cysteine 65–cysteine 138, cysteine 66–cysteine 104, cysteine 73–cysteine 97, and cysteine 91–cysteine 102. Ca(2+) contacts are provided by tyrosine 43, glycine 45, and glycine 47. The active site involves histidine 63. Aspartate 64 contributes to the Ca(2+) binding site. Aspartate 105 is a catalytic residue.

It belongs to the phospholipase A2 family. Group II subfamily. D49 sub-subfamily. In terms of assembly, homodimer. The cofactor is Ca(2+). As to expression, expressed by the venom gland.

It is found in the secreted. It carries out the reaction a 1,2-diacyl-sn-glycero-3-phosphocholine + H2O = a 1-acyl-sn-glycero-3-phosphocholine + a fatty acid + H(+). In terms of biological role, snake venom phospholipase A2 (PLA2) that displays edema-inducing activities, as well as presynaptic neurotoxicity and low myotoxicity. PLA2 catalyzes the calcium-dependent hydrolysis of the 2-acyl groups in 3-sn-phosphoglycerides. The sequence is that of Basic phospholipase A2 trimucrotoxin from Protobothrops mucrosquamatus (Taiwan habu).